The sequence spans 693 residues: CREB-regulated transcription coactivator 2 (693 aa).

Residues 1–20 (MATSGANGPGSATASASNPR) are compositionally biased toward polar residues. The tract at residues 1-30 (MATSGANGPGSATASASNPRKFSEKIALQK) is disordered. The residue at position 2 (alanine 2) is an N-acetylalanine. At arginine 51 the chain carries Asymmetric dimethylarginine; by PRMT6. Phosphoserine occurs at positions 70, 86, and 90. 3 positions are modified to asymmetric dimethylarginine; by PRMT6: arginine 99, arginine 120, and arginine 123. Serine 136 is subject to Phosphoserine. Asymmetric dimethylarginine; by PRMT6 is present on residues arginine 161 and arginine 168. Residue threonine 169 is modified to Phosphothreonine. Phosphoserine is present on serine 171. Positions 174–188 (ALHTSVMNPSPQDTY) are enriched in polar residues. The disordered stretch occupies residues 174–210 (ALHTSVMNPSPQDTYPSPAAPSVLPSRRGGCLDGETD). Positions 209-215 (TDSKVPA) are required for interaction with COP1. Residue lysine 234 forms a Glycyl lysine isopeptide (Lys-Gly) (interchain with G-Cter in SUMO2) linkage. A Nuclear export signal motif is present at residues 271–287 (TGGSLPDLTNLHFPPPL). Disordered regions lie at residues 271-307 (TGGS…GSST), 335-463 (HSPL…SPTL), and 476-548 (KLPT…QSYH). Position 274 is a phosphoserine; by MARK2 (serine 274). Phosphoserine is present on serine 306. The span at 339-351 (SHPSFQSSLSNPN) shows a compositional bias: polar residues. 2 stretches are compositionally biased toward low complexity: residues 352–378 (LQAS…SSLA) and 386–424 (SLGH…PGAS). Residues serine 368, serine 393, serine 433, and serine 456 each carry the phosphoserine modification. Over residues 447 to 463 (SQQQLPKQFSPTMSPTL) the composition is skewed to polar residues. Tyrosine 488 bears the Phosphotyrosine mark. Serine 489 and serine 492 each carry phosphoserine. Residue threonine 501 is modified to Phosphothreonine. 2 positions are modified to phosphoserine: serine 613 and serine 624.

This sequence belongs to the TORC family. As to quaternary structure, binds, as a tetramer, through its N-terminal region, with the bZIP domain of CREB1. 'Arg-314' in the bZIP domain of CREB1 is essential for this interaction. Interaction, via its C-terminal, with TAF4, enhances recruitment of TAF4 to CREB1. Interacts with SIK2. Interacts with 14-3-3 proteins, YWHAB and YWHAG. Interacts (probably when phosphorylated at Ser-171) with YWHAE. Interacts with calmodulin-dependent catalytic subunit PPP3CA/calcineurin A. Interaction with COP1 mediates nuclear export and degradation of CRTC2. Post-translationally, phosphorylation/dephosphorylation states of Ser-171 are required for regulating transduction of CREB activity. CRTCs/TORCs are inactive when phosphorylated, and active when dephosphorylated at this site. This primary site of phosphorylation, is regulated by cAMP and calcium levels and is dependent on the phosphorylation of SIKs (SIK1 and SIK2) by LKB1. Following adenylyl cyclase activation, dephosphorylated at Ser-171 by PPP3CA/calcineurin A resulting in CRTC2 dissociation from 14-3-3 proteins and PPP3CA. Both insulin and AMPK increase this phosphorylation of CRTC2 while glucagon suppresses it. Phosphorylation at Ser-274 by MARK2 is induced under low glucose conditions and dephosphorylated in response to glucose influx. Phosphorylation at Ser-274 promotes interaction with 14-3-3 proteins and translocation to the cytoplasm. In terms of processing, asymmetric dimethylation of arginine resisues by PRMT6 enhances the association of CRTC2 with CREB on the promoters of gluconeogenic genes.

It localises to the cytoplasm. The protein localises to the nucleus. Transcriptional coactivator for CREB1 which activates transcription through both consensus and variant cAMP response element (CRE) sites. Acts as a coactivator, in the SIK/TORC signaling pathway, being active when dephosphorylated and acts independently of CREB1 'Ser-133' phosphorylation. Enhances the interaction of CREB1 with TAF4. Regulates gluconeogenesis as a component of the LKB1/AMPK/TORC2 signaling pathway. Regulates the expression of specific genes such as the steroidogenic gene, StAR. Potent coactivator of PPARGC1A and inducer of mitochondrial biogenesis in muscle cells. This is CREB-regulated transcription coactivator 2 (CRTC2) from Bos taurus (Bovine).